We begin with the raw amino-acid sequence, 442 residues long: Trigger factor (442 aa).

The 86-residue stretch at 165–250 folds into the PPIase FKBP-type domain; the sequence is DDTAQIDFEG…LHKILQKELP (86 aa).

The protein belongs to the FKBP-type PPIase family. Tig subfamily.

It is found in the cytoplasm. The enzyme catalyses [protein]-peptidylproline (omega=180) = [protein]-peptidylproline (omega=0). In terms of biological role, involved in protein export. Acts as a chaperone by maintaining the newly synthesized protein in an open conformation. Functions as a peptidyl-prolyl cis-trans isomerase. This chain is Trigger factor, found in Helicobacter hepaticus (strain ATCC 51449 / 3B1).